The chain runs to 377 residues: Glutamate 5-kinase (377 aa).

K18 serves as a coordination point for ATP. Positions 59, 146, and 158 each coordinate substrate. ATP-binding positions include S178–D179 and T222–K228. Residues Q286–T363 enclose the PUA domain.

This sequence belongs to the glutamate 5-kinase family.

It is found in the cytoplasm. It carries out the reaction L-glutamate + ATP = L-glutamyl 5-phosphate + ADP. The protein operates within amino-acid biosynthesis; L-proline biosynthesis; L-glutamate 5-semialdehyde from L-glutamate: step 1/2. Its function is as follows. Catalyzes the transfer of a phosphate group to glutamate to form L-glutamate 5-phosphate. The protein is Glutamate 5-kinase of Caulobacter vibrioides (strain ATCC 19089 / CIP 103742 / CB 15) (Caulobacter crescentus).